The following is a 290-amino-acid chain: MFKEYVSLTKPGIIMGNLISVLAGYFLAAKSESITLSLLVYTMLGVALVIASGCVVNNIFDRDIDAKMSRTRNRAIVTGSINIEFAFLFAIIMLLIGTGLLYKMANPLSAVMVLLGYVFYVFFYTMWYKRTSVYGTLVGSVSGAIPPLVGYLAVTNYLSLEAVLLFGLFCLWQMPHSYAIAMFRMKDYQQANIPVLPLVKGIQKARQHIMIYVLVFSVVALGLYAFGHTGYEYLAVVAISCYGWFKVTYRNMDESNYVQWSKSVFKTSLLAITAFSTVLGIELLPFSITF.

Transmembrane regions (helical) follow at residues 8–28, 36–56, 81–101, 108–128, 133–153, 163–183, 209–229, 230–247, and 270–290; these read LTKPGIIMGNLISVLAGYFLA, LSLLVYTMLGVALVIASGCVV, INIEFAFLFAIIMLLIGTGLL, LSAVMVLLGYVFYVFFYTMWY, VYGTLVGSVSGAIPPLVGYLA, VLLFGLFCLWQMPHSYAIAMF, IMIYVLVFSVVALGLYAFGHT, GYEYLAVVAISCYGWFKV, and LAITAFSTVLGIELLPFSITF.

This sequence belongs to the UbiA prenyltransferase family. Protoheme IX farnesyltransferase subfamily.

It is found in the cell inner membrane. The catalysed reaction is heme b + (2E,6E)-farnesyl diphosphate + H2O = Fe(II)-heme o + diphosphate. It functions in the pathway porphyrin-containing compound metabolism; heme O biosynthesis; heme O from protoheme: step 1/1. Converts heme B (protoheme IX) to heme O by substitution of the vinyl group on carbon 2 of heme B porphyrin ring with a hydroxyethyl farnesyl side group. In Aliivibrio salmonicida (strain LFI1238) (Vibrio salmonicida (strain LFI1238)), this protein is Protoheme IX farnesyltransferase.